A 247-amino-acid polypeptide reads, in one-letter code: Probable transcriptional regulatory protein Glov_1245 (247 aa).

Belongs to the TACO1 family.

The protein localises to the cytoplasm. This is Probable transcriptional regulatory protein Glov_1245 from Trichlorobacter lovleyi (strain ATCC BAA-1151 / DSM 17278 / SZ) (Geobacter lovleyi).